We begin with the raw amino-acid sequence, 215 residues long: Thiamine-phosphate synthase (215 aa).

Residues 43-47 (QFRDK) and Asn-78 contribute to the 4-amino-2-methyl-5-(diphosphooxymethyl)pyrimidine site. Residues Asp-79 and Asp-98 each coordinate Mg(2+). Ser-117 contacts 4-amino-2-methyl-5-(diphosphooxymethyl)pyrimidine. Residue 143–145 (TNS) coordinates 2-[(2R,5Z)-2-carboxy-4-methylthiazol-5(2H)-ylidene]ethyl phosphate. Lys-146 lines the 4-amino-2-methyl-5-(diphosphooxymethyl)pyrimidine pocket. 2-[(2R,5Z)-2-carboxy-4-methylthiazol-5(2H)-ylidene]ethyl phosphate-binding positions include Gly-174 and 194–195 (IS).

The protein belongs to the thiamine-phosphate synthase family. The cofactor is Mg(2+).

It carries out the reaction 2-[(2R,5Z)-2-carboxy-4-methylthiazol-5(2H)-ylidene]ethyl phosphate + 4-amino-2-methyl-5-(diphosphooxymethyl)pyrimidine + 2 H(+) = thiamine phosphate + CO2 + diphosphate. The catalysed reaction is 2-(2-carboxy-4-methylthiazol-5-yl)ethyl phosphate + 4-amino-2-methyl-5-(diphosphooxymethyl)pyrimidine + 2 H(+) = thiamine phosphate + CO2 + diphosphate. The enzyme catalyses 4-methyl-5-(2-phosphooxyethyl)-thiazole + 4-amino-2-methyl-5-(diphosphooxymethyl)pyrimidine + H(+) = thiamine phosphate + diphosphate. The protein operates within cofactor biosynthesis; thiamine diphosphate biosynthesis; thiamine phosphate from 4-amino-2-methyl-5-diphosphomethylpyrimidine and 4-methyl-5-(2-phosphoethyl)-thiazole: step 1/1. Condenses 4-methyl-5-(beta-hydroxyethyl)thiazole monophosphate (THZ-P) and 2-methyl-4-amino-5-hydroxymethyl pyrimidine pyrophosphate (HMP-PP) to form thiamine monophosphate (TMP). This chain is Thiamine-phosphate synthase, found in Lactococcus lactis subsp. lactis (strain IL1403) (Streptococcus lactis).